Consider the following 169-residue polypeptide: Peptide methionine sulfoxide reductase MsrA (169 aa).

The active site involves Cys10.

Belongs to the MsrA Met sulfoxide reductase family.

The enzyme catalyses L-methionyl-[protein] + [thioredoxin]-disulfide + H2O = L-methionyl-(S)-S-oxide-[protein] + [thioredoxin]-dithiol. It carries out the reaction [thioredoxin]-disulfide + L-methionine + H2O = L-methionine (S)-S-oxide + [thioredoxin]-dithiol. In terms of biological role, has an important function as a repair enzyme for proteins that have been inactivated by oxidation. Catalyzes the reversible oxidation-reduction of methionine sulfoxide in proteins to methionine. This chain is Peptide methionine sulfoxide reductase MsrA, found in Streptococcus pyogenes serotype M12 (strain MGAS2096).